The sequence spans 173 residues: ATP synthase subunit b (173 aa).

Residues 15–35 traverse the membrane as a helical segment; that stretch reads GVEWGTVIVQVLTFIVLLALL.

The protein belongs to the ATPase B chain family. As to quaternary structure, F-type ATPases have 2 components, F(1) - the catalytic core - and F(0) - the membrane proton channel. F(1) has five subunits: alpha(3), beta(3), gamma(1), delta(1), epsilon(1). F(0) has three main subunits: a(1), b(2) and c(10-14). The alpha and beta chains form an alternating ring which encloses part of the gamma chain. F(1) is attached to F(0) by a central stalk formed by the gamma and epsilon chains, while a peripheral stalk is formed by the delta and b chains.

It is found in the cell membrane. In terms of biological role, f(1)F(0) ATP synthase produces ATP from ADP in the presence of a proton or sodium gradient. F-type ATPases consist of two structural domains, F(1) containing the extramembraneous catalytic core and F(0) containing the membrane proton channel, linked together by a central stalk and a peripheral stalk. During catalysis, ATP synthesis in the catalytic domain of F(1) is coupled via a rotary mechanism of the central stalk subunits to proton translocation. Its function is as follows. Component of the F(0) channel, it forms part of the peripheral stalk, linking F(1) to F(0). This is ATP synthase subunit b from Staphylococcus aureus (strain MSSA476).